The primary structure comprises 329 residues: Glycerol-3-phosphate dehydrogenase [NAD(P)+] (329 aa).

NADPH-binding residues include Trp-11, Arg-31, and Lys-105. Sn-glycerol 3-phosphate is bound by residues Lys-105, Gly-135, and Thr-137. Ala-139 lines the NADPH pocket. Lys-190, Asp-243, Ser-253, Arg-254, and Asn-255 together coordinate sn-glycerol 3-phosphate. The active-site Proton acceptor is Lys-190. Arg-254 contacts NADPH. Residues Val-277 and Glu-279 each coordinate NADPH.

This sequence belongs to the NAD-dependent glycerol-3-phosphate dehydrogenase family.

Its subcellular location is the cytoplasm. The enzyme catalyses sn-glycerol 3-phosphate + NAD(+) = dihydroxyacetone phosphate + NADH + H(+). It carries out the reaction sn-glycerol 3-phosphate + NADP(+) = dihydroxyacetone phosphate + NADPH + H(+). It participates in membrane lipid metabolism; glycerophospholipid metabolism. Catalyzes the reduction of the glycolytic intermediate dihydroxyacetone phosphate (DHAP) to sn-glycerol 3-phosphate (G3P), the key precursor for phospholipid synthesis. The polypeptide is Glycerol-3-phosphate dehydrogenase [NAD(P)+] (Maridesulfovibrio salexigens (strain ATCC 14822 / DSM 2638 / NCIMB 8403 / VKM B-1763) (Desulfovibrio salexigens)).